The following is a 676-amino-acid chain: MEVENKLNRMTAAGLLIAIGIVYGDIGTSPLYVMKSVIAGNGGINTVGRDLIIGTISLILWTVTLLTTVQTVIIALRATNHGEGGIFALYALIRKKAAWLVWPALIGGAAILADGTLTPAVTVTSAIEGLKGLEFGKGNVPVSNQTTVLVITIVILLVLFSIQRMGTRIIGKAFGPIMLVWFAFLGVMGLINIGGNWWILQALNPYYAIKLLFSPYNKAGFAILGSIFLATTGAEALYSDVGHVGKGNIIGSWPFVFVCLSLNYFGQGVWILNNTNMHSATEINPFYAMIPENIRLASIVLATLAAIIASQALITGSFTLVAESINLKFLPRMNILYPSDERGQIYIPAVNKMLGITTIALVLFFRTSAHMEAAYGLSITISMLTTTILLYEWLVLKQGHNLANLLFVIFFSTINILFMGSSLSKFTHGGYVSLLITLLIASVMVVWYFGNKVRDQNVAGNAYVRLDEYTDMLTNLSHDDNYPTYSDNLVYMANVKYNKFIKREILYSILDKRPKRARAYWFVTVNVTNEPFTAEYAVNTFGTKNVINIQLYLGFKKQTSVNVYLRQIVHDLIKDNTIEAQPQEYTTTPGRDVGDFKFVIVNDVISPSTTLSSYKKWLVKARVQLQNLSLNPAQWFGLEFADMVIERVPLILGKQEPERIKRVAPVDYSKASLNKK.

A run of 12 helical transmembrane segments spans residues 14-34, 56-76, 97-117, 142-162, 173-193, 219-239, 252-272, 296-316, 345-365, 376-396, 402-422, and 429-449; these read GLLI…LYVM, ISLI…IIAL, AAWL…DGTL, VSNQ…LFSI, AFGP…LINI, AGFA…ALYS, SWPF…VWIL, LASI…LITG, IYIP…VLFF, GLSI…WLVL, LANL…MGSS, and GGYV…VWYF.

Belongs to the HAK/KUP transporter (TC 2.A.72) family.

It is found in the cell membrane. It carries out the reaction K(+)(in) + H(+)(in) = K(+)(out) + H(+)(out). Transport of potassium into the cell. Likely operates as a K(+):H(+) symporter. This chain is Probable potassium transport system protein Kup, found in Lactobacillus delbrueckii subsp. bulgaricus (strain ATCC BAA-365 / Lb-18).